A 153-amino-acid polypeptide reads, in one-letter code: MWMKTVFWGLLVFMLVATTMAVEYGARSHNSGPWSWCNPATGYKVSALTGCRAMVKLQCVGSQVPEAVLRDCCQQLADINNEWCRCGDLSSMLRSVYQELGVREGKEVLPGCRKEVMKLTAASVPEVCKVPIPNPSGDRAGVCYGDWAAYPDV.

The N-terminal stretch at 1–30 is a signal peptide; sequence MWMKTVFWGLLVFMLVATTMAVEYGARSHN. 5 cysteine pairs are disulfide-bonded: C37-C84, C51-C72, C59-C112, C73-C128, and C86-C143.

It belongs to the protease inhibitor I6 (cereal trypsin/alpha-amylase inhibitor) family. Monomer. Post-translationally, the disulfide bonds are essential for the inhibitor activity. As to expression, endosperm.

It is found in the secreted. In terms of biological role, alpha-amylase inhibitor. This chain is Alpha-amylase inhibitor 0.28 (IMA1), found in Triticum aestivum (Wheat).